The following is a 224-amino-acid chain: Oxygen-evolving enhancer protein 3-1, chloroplastic (224 aa).

The transit peptide at 1–44 (MASMGGLHGASPAVLEGSLKINGSSRLNGSGRVAVAQRSRLVVR) directs the protein to the chloroplast. The N-terminal 31 residues, 45-75 (AQQSEETSRRSVIGLVAAGLAGGSFVQAVLA), are a transit peptide targeting the thylakoid. T189 carries the post-translational modification Phosphothreonine. Y209 is subject to Phosphotyrosine. The residue at position 212 (T212) is a Phosphothreonine.

This sequence belongs to the PsbQ family. In terms of tissue distribution, expressed in green tissue, with high steady-state mRNA levels in leaves. Not expressed in roots.

The protein resides in the plastid. Its subcellular location is the chloroplast thylakoid membrane. Its function is as follows. Required for photosystem II assembly/stability and photoautotrophic growth under low light conditions. This is Oxygen-evolving enhancer protein 3-1, chloroplastic (PSBQ1) from Arabidopsis thaliana (Mouse-ear cress).